Here is a 710-residue protein sequence, read N- to C-terminus: MNQELLSVGSKRRRTGGSLRGNASSSQVDEGQMNRVVEEDPQQQARHQEEEHTARNGELVGANPRPGDQNDTQQGQVEENNNRFISVDEDSSGNQEEQEEDEEHAGEQEEEEEEEEEEEEMDQESDDFDPSDDSSREDEHTHNSNVTNCSSVSDLPAHQLSSPFYTKTTKMKRKLDHGSEVRSFSLGKKPCKVSDYTSTTGLVPCSATPTTFGDLRAANGQGQQRRRITSVQPPTGLQEWLKMFQSWSGPEKLLALDELIDSCEPTQVKHMMQVIEPQFQRDFISLLPKELALYVLSFLEPKDLLQAAQTCRYWRILAEDNLLWREKCKEEGIDEPLHIKRRKIIKPGFIHSPWKSAYIRQHRIDTNWRRGELKSPKVLKGHDDHVITCLQFCGNRIVSGSDDNTLKVWSAVTGKCLRTLVGHTGGVWSSQMRDNIIISGSTDRTLKVWNAETGECIHTLYGHTSTVRCMHLHEKRVVSGSRDATLRVWDIETGQCLHVLMGHVAAVRCVQYDGRRVVSGAYDFMVKVWDPETETCLHTLQGHTNRVYSLQFDGIHVVSGSLDTSIRVWDVETGNCIHTLTGHQSLTSGMELKDNILVSGNADSTVKIWDIKTGQCLQTLQGPSKHQSAVTCLQFNKNFVITSSDDGTVKLWDLKTGEFIRNLVTLESGGSGGVVWRIRASNTKLVCAVGSRNGTEETKLLVLDFDVDMK.

Residues 1–158 (MNQELLSVGS…CSSVSDLPAH (158 aa)) are disordered. Phosphoserine is present on S26. The segment covering 46-55 (RHQEEEHTAR) has biased composition (basic and acidic residues). Residues 69–84 (QNDTQQGQVEENNNRF) are compositionally biased toward polar residues. The span at 87–132 (VDEDSSGNQEEQEEDEEHAGEQEEEEEEEEEEEEMDQESDDFDPSD) shows a compositional bias: acidic residues. Residues 133-142 (DSSREDEHTH) show a composition bias toward basic and acidic residues. Residues 143–158 (NSNVTNCSSVSDLPAH) show a composition bias toward polar residues. A Phosphothreonine modification is found at T208. S230 bears the Phosphoserine; by SGK1 mark. The F-box domain occupies 281–327 (RDFISLLPKELALYVLSFLEPKDLLQAAQTCRYWRILAEDNLLWREK). WD repeat units follow at residues 381-421 (GHDD…RTLV), 423-459 (HTGG…CIHT), 462-501 (GHTS…HVLM), 503-539 (HVAA…CLHT), 542-581 (GHTN…HTLT), 583-621 (HQSL…QTLQ), and 625-662 (KHQS…FIRN).

As to quaternary structure, homodimer; homodimerization plays a role in substrate binding and/or ubiquitination and degradation. Component of the SCF(FBXW7) complex consisting of CUL1, RBX1, SKP1 and FBXW7. Interacts (via F-box domain) with SKP1. Interacts (via F-box domain) with pseudophosphatase STYX; the interaction is direct and prevents FBXW7 interaction with SKP1. Interacts with cyclin-E (CCNE1 or CCNE2). Interacts with PSEN1. Forms a trimeric complex with NOTCH1 and SGK1. Interacts with NOTCH1 intracellular domain/NICD and NOTCH4 intracellular domain/NICD. Interacts with NOTCH2 intracellular domain (N2ICD). Interacts with MYC (when phosphorylated). Interacts with USP28, counteracting ubiquitination of MYC. Interacts (when phosphorylated at Thr-208) with PIN1, disrupting FBXW7 dimerization and promoting FBXW7 autoubiquitination and degradation. Interacts with UBE2QL1. Interacts with FAM83D; promotes FBXW7 degradation. Interacts with MYCN; FBXW7 competes with AURKA for binding to unphosphorylated MYCN but not for binding to phosphorylated MYCN. Interacts with JUN. Found in a complex with JUN and PRR7. Interacts with JUN and PRR7; the interaction inhibits ubiquitination-mediated JUN degradation, promoting its phosphorylation and transcriptional activity. Interacts with NFE2L1. Interacts with NR1D1. Interacts with RICTOR; mediates RICTOR ubiquitination and degradation. Interacts with USP38, counteracting ubiquitination of MYC. Phosphorylation at Thr-208 promotes interaction with PIN1, leading to disrupt FBXW7 dimerization and promoting FBXW7 autoubiquitination and degradation. Phosphorylated by ATM at Ser-26 in response to DNA damage, promoting recruitment to DNA damage sites and 'Lys-63'-linked ubiquitination of phosphorylated XRCC4. Post-translationally, ubiquitinated: autoubiquitinates following phosphorylation at Thr-208 and subsequent interaction with PIN1. Ubiquitination leads to its proteasomal degradation. As to expression, widely expressed with highest levels in brain, heart and testis.

Its subcellular location is the nucleus. The protein localises to the nucleoplasm. It is found in the chromosome. It participates in protein modification; protein ubiquitination. In terms of biological role, substrate recognition component of a SCF (SKP1-CUL1-F-box protein) E3 ubiquitin-protein ligase complex which mediates the ubiquitination and subsequent proteasomal degradation of target proteins. Recognizes and binds phosphorylated sites/phosphodegrons within target proteins and thereafter brings them to the SCF complex for ubiquitination. Mediates ubiquitination and subsequent degradation of CCNE1 and MYC. Identified substrates include cyclin-E (CCNE1 or CCNE2), DISC1, JUN, MYC, NOTCH1 released notch intracellular domain (NICD), NOTCH2, MCL1, MLST8, RICTOR and probably PSEN1. Acts as a negative regulator of JNK signaling by binding to phosphorylated JUN and promoting its ubiquitination and subsequent degradation. SCF(FBXW7) complex mediates the ubiquitination and subsequent degradation of NFE2L1. Involved in bone homeostasis and negative regulation of osteoclast differentiation. Regulates the amplitude of the cyclic expression of hepatic core clock genes and genes involved in lipid and glucose metabolism via ubiquitination and proteasomal degradation of their transcriptional repressor NR1D1; CDK1-dependent phosphorylation of NR1D1 is necessary for SCF(FBXW7)-mediated ubiquitination. Also able to promote 'Lys-63'-linked ubiquitination in response to DNA damage. The SCF(FBXW7) complex facilitates double-strand break repair following phosphorylation by ATM: phosphorylation promotes localization to sites of double-strand breaks and 'Lys-63'-linked ubiquitination of phosphorylated XRCC4, enhancing DNA non-homologous end joining. This is F-box/WD repeat-containing protein 7 from Mus musculus (Mouse).